The primary structure comprises 625 residues: tRNA uridine 5-carboxymethylaminomethyl modification enzyme MnmG (625 aa).

Position 14–19 (14–19) interacts with FAD; that stretch reads GAGHAG. 273 to 287 serves as a coordination point for NAD(+); sequence GPRYCPSIEDKIVRF.

It belongs to the MnmG family. As to quaternary structure, homodimer. Heterotetramer of two MnmE and two MnmG subunits. It depends on FAD as a cofactor.

The protein resides in the cytoplasm. In terms of biological role, NAD-binding protein involved in the addition of a carboxymethylaminomethyl (cmnm) group at the wobble position (U34) of certain tRNAs, forming tRNA-cmnm(5)s(2)U34. In Clostridium botulinum (strain Loch Maree / Type A3), this protein is tRNA uridine 5-carboxymethylaminomethyl modification enzyme MnmG.